The primary structure comprises 484 residues: tRNA sulfurtransferase (484 aa).

Residues 61–165 enclose the THUMP domain; that stretch reads PLILDLLKRT…GDKMLLVEAR (105 aa). ATP is bound by residues 183-184, K265, G287, and Q296; that span reads LI. A disulfide bridge links C344 with C456. The Rhodanese domain occupies 404–483; sequence LTEKDIILDI…YQNVKVFNLP (80 aa). The active-site Cysteine persulfide intermediate is C456.

The protein belongs to the ThiI family.

It is found in the cytoplasm. The enzyme catalyses [ThiI sulfur-carrier protein]-S-sulfanyl-L-cysteine + a uridine in tRNA + 2 reduced [2Fe-2S]-[ferredoxin] + ATP + H(+) = [ThiI sulfur-carrier protein]-L-cysteine + a 4-thiouridine in tRNA + 2 oxidized [2Fe-2S]-[ferredoxin] + AMP + diphosphate. It catalyses the reaction [ThiS sulfur-carrier protein]-C-terminal Gly-Gly-AMP + S-sulfanyl-L-cysteinyl-[cysteine desulfurase] + AH2 = [ThiS sulfur-carrier protein]-C-terminal-Gly-aminoethanethioate + L-cysteinyl-[cysteine desulfurase] + A + AMP + 2 H(+). It participates in cofactor biosynthesis; thiamine diphosphate biosynthesis. In terms of biological role, catalyzes the ATP-dependent transfer of a sulfur to tRNA to produce 4-thiouridine in position 8 of tRNAs, which functions as a near-UV photosensor. Also catalyzes the transfer of sulfur to the sulfur carrier protein ThiS, forming ThiS-thiocarboxylate. This is a step in the synthesis of thiazole, in the thiamine biosynthesis pathway. The sulfur is donated as persulfide by IscS. The sequence is that of tRNA sulfurtransferase from Haemophilus ducreyi (strain 35000HP / ATCC 700724).